Reading from the N-terminus, the 255-residue chain is Hydroxyacylglutathione hydrolase (255 aa).

Residues His53, His55, Asp57, His58, His110, Asp127, and His165 each contribute to the Zn(2+) site.

The protein belongs to the metallo-beta-lactamase superfamily. Glyoxalase II family. Monomer. Zn(2+) serves as cofactor.

It carries out the reaction an S-(2-hydroxyacyl)glutathione + H2O = a 2-hydroxy carboxylate + glutathione + H(+). It functions in the pathway secondary metabolite metabolism; methylglyoxal degradation; (R)-lactate from methylglyoxal: step 2/2. Thiolesterase that catalyzes the hydrolysis of S-D-lactoyl-glutathione to form glutathione and D-lactic acid. The protein is Hydroxyacylglutathione hydrolase of Xanthomonas euvesicatoria pv. vesicatoria (strain 85-10) (Xanthomonas campestris pv. vesicatoria).